Here is a 527-residue protein sequence, read N- to C-terminus: Tyrosine-protein kinase TXK (527 aa).

Residues 35 to 79 are disordered; it reads DEELPEKYTQRRRPWLSQLSNKKQSNTGRVQPSKRKPLPPLPPSE. Over residues 51–64 the composition is skewed to polar residues; sequence SQLSNKKQSNTGRV. The Nuclear localization signal signature appears at 68–73; sequence KRKPLP. The SH3 domain maps to 82 to 142; that stretch reads EEKIQVKALY…PSNYVTENKI (61 aa). A Phosphotyrosine; by autocatalysis modification is found at Y91. Residues 150–246 enclose the SH2 domain; sequence WYHRNITRNQ…GLMTRLRYPV (97 aa). The Protein kinase domain maps to 271-527; sequence LAFIKEIGSG…RAVTEIAETW (257 aa). Residues 277–285 and K299 each bind ATP; that span reads IGSGQFGVV. Residue D390 is the Proton acceptor of the active site. The residue at position 420 (Y420) is a Phosphotyrosine; by FYN and autocatalysis.

Belongs to the protein kinase superfamily. Tyr protein kinase family. TEC subfamily. As to quaternary structure, interacts with PARP1 and EEF1A1. Interacts with SH2D2A. Interacts with FYN. In terms of processing, phosphorylated at Tyr-420 by FYN. Autophosphorylation at Tyr-91 is critical for the activation of TXK, leading to the up-regulation of IFN-gamma gene transcription. The cysteine string at the N-terminus is palmitoylated and required for the proper subcellular location. In terms of tissue distribution, expressed in T-cells and some myeloid cell lines. Expressed in Th1/Th0 cells with IFN-gamma-producing potential.

The protein localises to the cytoplasm. It is found in the nucleus. The protein resides in the cell membrane. It catalyses the reaction L-tyrosyl-[protein] + ATP = O-phospho-L-tyrosyl-[protein] + ADP + H(+). Activated by phosphorylation by FYN. Functionally, non-receptor tyrosine kinase that plays a redundant role with ITK in regulation of the adaptive immune response. Regulates the development, function and differentiation of conventional T-cells and nonconventional NKT-cells. When antigen presenting cells (APC) activate T-cell receptor (TCR), a series of phosphorylation leads to the recruitment of TXK to the cell membrane, where it is phosphorylated at Tyr-420. Phosphorylation leads to TXK full activation. Also contributes to signaling from many receptors and participates in multiple downstream pathways, including regulation of the actin cytoskeleton. Like ITK, can phosphorylate PLCG1, leading to its localization in lipid rafts and activation, followed by subsequent cleavage of its substrates. In turn, the endoplasmic reticulum releases calcium in the cytoplasm and the nuclear activator of activated T-cells (NFAT) translocates into the nucleus to perform its transcriptional duty. Plays a role in the positive regulation of IFNG transcription in T-helper 1 cells as part of an IFNG promoter-binding complex with PARP1 and EEF1A1. Within the complex, phosphorylates both PARP1 and EEF1A1. Also phosphorylates key sites in LCP2 leading to the up-regulation of Th1 preferred cytokine IL-2. Phosphorylates 'Tyr-201' of CTLA4 which leads to the association of PI-3 kinase with the CTLA4 receptor. This chain is Tyrosine-protein kinase TXK (TXK), found in Homo sapiens (Human).